Reading from the N-terminus, the 151-residue chain is Ribosomal RNA large subunit methyltransferase H (151 aa).

S-adenosyl-L-methionine contacts are provided by residues G100 and 119–124; that span reads LSKMTF.

It belongs to the RNA methyltransferase RlmH family. In terms of assembly, homodimer.

It is found in the cytoplasm. It carries out the reaction pseudouridine(1915) in 23S rRNA + S-adenosyl-L-methionine = N(3)-methylpseudouridine(1915) in 23S rRNA + S-adenosyl-L-homocysteine + H(+). Its function is as follows. Specifically methylates the pseudouridine at position 1915 (m3Psi1915) in 23S rRNA. The protein is Ribosomal RNA large subunit methyltransferase H of Thermotoga maritima (strain ATCC 43589 / DSM 3109 / JCM 10099 / NBRC 100826 / MSB8).